Consider the following 346-residue polypeptide: Phosphoribosylformylglycinamidine cyclo-ligase (346 aa).

Belongs to the AIR synthase family.

Its subcellular location is the cytoplasm. The enzyme catalyses 2-formamido-N(1)-(5-O-phospho-beta-D-ribosyl)acetamidine + ATP = 5-amino-1-(5-phospho-beta-D-ribosyl)imidazole + ADP + phosphate + H(+). It participates in purine metabolism; IMP biosynthesis via de novo pathway; 5-amino-1-(5-phospho-D-ribosyl)imidazole from N(2)-formyl-N(1)-(5-phospho-D-ribosyl)glycinamide: step 2/2. The polypeptide is Phosphoribosylformylglycinamidine cyclo-ligase (Proteus mirabilis (strain HI4320)).